A 455-amino-acid polypeptide reads, in one-letter code: Beta-1,4-mannosyltransferase bre-3 (455 aa).

This sequence belongs to the glycosyltransferase 2 family. Endothelial cells.

It localises to the cytoplasm. Its pathway is protein modification; protein glycosylation. Functionally, glycosyltransferase with a proposed role in glycosphingolipid biosynthesis. Involved in susceptibility to pore-forming crystal toxins in conjunction with bre-1, bre-2, bre-4 and bre-5. Involved in resistance to the nematotoxic C.cinerea galectin Cgl2. Has a role in determining brood size. This chain is Beta-1,4-mannosyltransferase bre-3 (bre-3), found in Caenorhabditis elegans.